The following is a 452-amino-acid chain: Probable carboxypeptidase ACLA_088580 (452 aa).

The signal sequence occupies residues 1 to 18 (MRSLTLLLSLSTALRSVA). Residues N107 and N156 are each glycosylated (N-linked (GlcNAc...) asparagine). Residue D175 coordinates Zn(2+). E207 (proton acceptor) is an active-site residue. Residue E208 participates in Zn(2+) binding.

It belongs to the peptidase M20A family. It depends on Zn(2+) as a cofactor.

It localises to the secreted. This is Probable carboxypeptidase ACLA_088580 from Aspergillus clavatus (strain ATCC 1007 / CBS 513.65 / DSM 816 / NCTC 3887 / NRRL 1 / QM 1276 / 107).